Reading from the N-terminus, the 556-residue chain is Guanine nucleotide-binding protein-like 3 homolog (556 aa).

A disordered region spans residues 29-50 (NRKVKKEAKKNGTTNKKEKTIS). Positions 58–95 (KEEILVQAEQEREKIKVRQEAAKEAAKIHRIEKRKNNL) form a coiled coil. Residues 138-317 (ASEVRKTVEI…LIDSPGVILV (180 aa)) form the CP-type G domain. Residues 184–187 (NKID), 266–273 (GFPNVGKS), and 310–313 (DSPG) each bind GTP. Disordered regions lie at residues 461–508 (APHN…PESL) and 525–556 (KKQK…AMEM). Over residues 466–478 (DEEEDDDDEMETD) the composition is skewed to acidic residues. Positions 525–535 (KKQKKKSKKTA) are enriched in basic residues.

It belongs to the TRAFAC class YlqF/YawG GTPase family.

It is found in the nucleus. May play a role in regulating cellular proliferation in both germline and somatic tissues. This chain is Guanine nucleotide-binding protein-like 3 homolog, found in Caenorhabditis elegans.